Here is a 373-residue protein sequence, read N- to C-terminus: Protein MGF 360-6L (373 aa).

Belongs to the asfivirus MGF 360 family.

Plays a role in virus cell tropism, and may be required for efficient virus replication in macrophages. The polypeptide is Protein MGF 360-6L (Ornithodoros (relapsing fever ticks)).